Reading from the N-terminus, the 319-residue chain is GATA transcription factor 18 (319 aa).

Low complexity predominate over residues 1 to 15 (MPDAAAAAAAAQDAD). The disordered stretch occupies residues 1–74 (MPDAAAAAAA…AAPEPVSALL (74 aa)). Residues 31–60 (DNDDDDGDDGTEEDEEEDDDEEGDEEELPP) show a composition bias toward acidic residues. One can recognise a Tify domain in the interval 74–109 (LPGSPNQLTLLFQGEVYVFESVTPEKVQAVLLLLGR). Residues 143–185 (RVASLIRFREKRKERNFDKKIRYAVRKEVALRMQRRKGQFAGR) form the CCT domain. A GATA-type zinc finger spans residues 215 to 242 (CQNCGTSEKMTPAMRRGPAGPRTLCNAC). The tract at residues 292–319 (ITASHGEVMGDSTPANEAEIGAPKAQSQ) is disordered.

This sequence belongs to the type IV zinc-finger family. Class C subfamily.

The protein localises to the nucleus. Its function is as follows. Transcriptional activator that specifically binds 5'-GATA-3' or 5'-GAT-3' motifs within gene promoters. The chain is GATA transcription factor 18 from Oryza sativa subsp. japonica (Rice).